A 624-amino-acid chain; its full sequence is Hemocyanin E chain (624 aa).

Residues His-169, His-173, His-200, His-320, His-324, and His-360 each coordinate Cu cation. N-linked (GlcNAc...) asparagine glycosylation occurs at Asn-445. Cysteines 529 and 577 form a disulfide.

It belongs to the tyrosinase family. Hemocyanin subfamily. As to quaternary structure, tarantula hemocyanin is a 24-chain polymer with seven different chains identified. In terms of tissue distribution, hemolymph.

It localises to the secreted. The protein localises to the extracellular space. Functionally, hemocyanins are copper-containing oxygen carriers occurring freely dissolved in the hemolymph of many mollusks and arthropods. The polypeptide is Hemocyanin E chain (HCE) (Aphonopelma sp. (American tarantula)).